A 96-amino-acid polypeptide reads, in one-letter code: UPF0235 protein ECA3630 (96 aa).

The protein belongs to the UPF0235 family.

This Pectobacterium atrosepticum (strain SCRI 1043 / ATCC BAA-672) (Erwinia carotovora subsp. atroseptica) protein is UPF0235 protein ECA3630.